Here is a 336-residue protein sequence, read N- to C-terminus: Quinolinate synthase (336 aa).

2 residues coordinate iminosuccinate: histidine 25 and serine 42. Residue cysteine 86 coordinates [4Fe-4S] cluster. Residues tyrosine 117 to asparagine 119 and serine 138 each bind iminosuccinate. Cysteine 198 provides a ligand contact to [4Fe-4S] cluster. Iminosuccinate is bound by residues histidine 224–glutamate 226 and threonine 241. A [4Fe-4S] cluster-binding site is contributed by cysteine 288.

The protein belongs to the quinolinate synthase family. Type 3 subfamily. [4Fe-4S] cluster is required as a cofactor.

The protein resides in the cytoplasm. The catalysed reaction is iminosuccinate + dihydroxyacetone phosphate = quinolinate + phosphate + 2 H2O + H(+). The protein operates within cofactor biosynthesis; NAD(+) biosynthesis; quinolinate from iminoaspartate: step 1/1. Functionally, catalyzes the condensation of iminoaspartate with dihydroxyacetone phosphate to form quinolinate. This is Quinolinate synthase from Helicobacter pylori (strain ATCC 700392 / 26695) (Campylobacter pylori).